Consider the following 279-residue polypeptide: Tryptophan synthase alpha chain (279 aa).

Active-site proton acceptor residues include E50 and D61.

The protein belongs to the TrpA family. As to quaternary structure, tetramer of two alpha and two beta chains.

The catalysed reaction is (1S,2R)-1-C-(indol-3-yl)glycerol 3-phosphate + L-serine = D-glyceraldehyde 3-phosphate + L-tryptophan + H2O. It functions in the pathway amino-acid biosynthesis; L-tryptophan biosynthesis; L-tryptophan from chorismate: step 5/5. Its function is as follows. The alpha subunit is responsible for the aldol cleavage of indoleglycerol phosphate to indole and glyceraldehyde 3-phosphate. The polypeptide is Tryptophan synthase alpha chain (Sinorhizobium medicae (strain WSM419) (Ensifer medicae)).